The sequence spans 409 residues: Shaggy-related protein kinase gamma (409 aa).

Ala-2 is subject to N-acetylalanine. In terms of domain architecture, Protein kinase spans 73-357 (YMAERVVGHG…ALDSLVHPFF (285 aa)). ATP-binding positions include 79–87 (VGHGSFGVV) and Lys-102. Asp-198 functions as the Proton acceptor in the catalytic mechanism. Residue Tyr-233 is modified to Phosphotyrosine.

The protein belongs to the protein kinase superfamily. CMGC Ser/Thr protein kinase family. GSK-3 subfamily. Binds to KIB1. Component of a complex made of POLAR, BASL, ASK7/BIN2 and ASK3/SK12. Binds to POLAR and BASL. In terms of processing, autophosphorylated mainly on threonine and serine residues. Roots, shoots and leaves.

Its subcellular location is the cytoplasm. The protein resides in the cell cortex. The enzyme catalyses L-seryl-[protein] + ATP = O-phospho-L-seryl-[protein] + ADP + H(+). It carries out the reaction L-threonyl-[protein] + ATP = O-phospho-L-threonyl-[protein] + ADP + H(+). Its function is as follows. May mediate extracellular signals to regulate transcription in differentiating cells. Probably involved first at the cortical polarity site, to restrict MAPK signaling and promote asymmetric cell division (ACD), and second in the nucleus of stomatal lineage ground cells (SLGCs) or meristemoids, to limit cell division and to promote differentiation into pavement or stomatal guard cells, respectively. Phosphorylate YDA and SPCH in vitro. The protein is Shaggy-related protein kinase gamma of Arabidopsis thaliana (Mouse-ear cress).